The sequence spans 135 residues: Large ribosomal subunit protein uL22c (135 aa).

This sequence belongs to the universal ribosomal protein uL22 family. In terms of assembly, part of the 50S ribosomal subunit.

Its subcellular location is the plastid. Functionally, this protein binds specifically to 23S rRNA. In terms of biological role, the globular domain of the protein is located near the polypeptide exit tunnel on the outside of the subunit, while an extended beta-hairpin is found that lines the wall of the exit tunnel in the center of the 70S ribosome. This Cuscuta exaltata (Tall dodder) protein is Large ribosomal subunit protein uL22c (rpl22).